The chain runs to 96 residues: Large ribosomal subunit protein uL23 (96 aa).

Belongs to the universal ribosomal protein uL23 family. As to quaternary structure, part of the 50S ribosomal subunit. Contacts protein L29, and trigger factor when it is bound to the ribosome.

Functionally, one of the early assembly proteins it binds 23S rRNA. One of the proteins that surrounds the polypeptide exit tunnel on the outside of the ribosome. Forms the main docking site for trigger factor binding to the ribosome. In Bacillus mycoides (strain KBAB4) (Bacillus weihenstephanensis), this protein is Large ribosomal subunit protein uL23.